The primary structure comprises 280 residues: Shikimate kinase (280 aa).

Residue 86 to 96 (PPGVGLKGSAA) participates in ATP binding.

This sequence belongs to the GHMP kinase family. Archaeal shikimate kinase subfamily.

The protein resides in the cytoplasm. It catalyses the reaction shikimate + ATP = 3-phosphoshikimate + ADP + H(+). It functions in the pathway metabolic intermediate biosynthesis; chorismate biosynthesis; chorismate from D-erythrose 4-phosphate and phosphoenolpyruvate: step 5/7. The protein is Shikimate kinase (aroK) of Aeropyrum pernix (strain ATCC 700893 / DSM 11879 / JCM 9820 / NBRC 100138 / K1).